A 153-amino-acid polypeptide reads, in one-letter code: Putative transcription factor YdeB (153 aa).

This sequence belongs to the CarD family.

The chain is Putative transcription factor YdeB (ydeB) from Bacillus subtilis (strain 168).